Reading from the N-terminus, the 224-residue chain is UPF0758 protein lwe1562 (224 aa).

An MPN domain is found at 102–224 (VIRCPDDAVK…YISLKEKGYF (123 aa)). The Zn(2+) site is built by H173, H175, and D186. Positions 173-186 (HNHPSGDPTPSSED) match the JAMM motif motif.

The protein belongs to the UPF0758 family.

The chain is UPF0758 protein lwe1562 from Listeria welshimeri serovar 6b (strain ATCC 35897 / DSM 20650 / CCUG 15529 / CIP 8149 / NCTC 11857 / SLCC 5334 / V8).